The sequence spans 141 residues: Large ribosomal subunit protein uL11 (141 aa).

The protein belongs to the universal ribosomal protein uL11 family. Part of the ribosomal stalk of the 50S ribosomal subunit. Interacts with L10 and the large rRNA to form the base of the stalk. L10 forms an elongated spine to which L12 dimers bind in a sequential fashion forming a multimeric L10(L12)X complex. In terms of processing, one or more lysine residues are methylated.

In terms of biological role, forms part of the ribosomal stalk which helps the ribosome interact with GTP-bound translation factors. The chain is Large ribosomal subunit protein uL11 from Latilactobacillus sakei subsp. sakei (strain 23K) (Lactobacillus sakei subsp. sakei).